A 148-amino-acid polypeptide reads, in one-letter code: MKALLVLGFLLLSASVQAKVFKHCELARILRSSALAGYRGVSLENWMCMAQHESNFDTEAINYNSTDQSTDYGIFQINSRYWCNDGKTPRAVNACGIPCSALLQDDITQAIQCAKRVVRDPQGIRAWVAWQRHCQNRDLSGYIRNCGV.

A signal peptide spans 1 to 18 (MKALLVLGFLLLSASVQA). In terms of domain architecture, C-type lysozyme spans 19 to 148 (KVFKHCELAR…LSGYIRNCGV (130 aa)). Intrachain disulfides connect C24–C146, C48–C134, C83–C99, and C95–C113. Catalysis depends on residues E53 and D71.

This sequence belongs to the glycosyl hydrolase 22 family. Monomer.

The protein localises to the secreted. The enzyme catalyses Hydrolysis of (1-&gt;4)-beta-linkages between N-acetylmuramic acid and N-acetyl-D-glucosamine residues in a peptidoglycan and between N-acetyl-D-glucosamine residues in chitodextrins.. Lysozymes have primarily a bacteriolytic function; those in tissues and body fluids are associated with the monocyte-macrophage system and enhance the activity of immunoagents. In the intestine they may also have a digestive function. This is Putative lysozyme C-2 (Lyz2) from Rattus norvegicus (Rat).